A 1848-amino-acid chain; its full sequence is Chitin synthase E (1848 aa).

A compositionally biased stretch (low complexity) spans 1–17 (MAAPSPAGGAPSHAQSS). The segment at 1–22 (MAAPSPAGGAPSHAQSSLPSLP) is disordered. The region spanning 1–779 (MAAPSPAGGA…CWADLAKVGE (779 aa)) is the Myosin motor domain. 102–109 (GESGSGKT) provides a ligand contact to ATP. Positions 593–621 (SSKPLRMPSMARRKTSPSSRLAFDAGDAD) are disordered. The tract at residues 659 to 683 (LDIVNKCLSSTNLNPYFIFCLKPND) is actin-binding. 2 consecutive transmembrane segments (helical) span residues 889–909 (WIAL…KLFG) and 928–948 (LIIW…PGLV). One can recognise a Cytochrome b5 heme-binding domain in the interval 952-1040 (QHVYSAAELS…LLDYRPTNIS (89 aa)). Residues asparagine 1038 and asparagine 1063 are each glycosylated (N-linked (GlcNAc...) asparagine). The helical transmembrane segment at 1200–1220 (FILAISVLICSIIVFKFLAAL) threads the bilayer. N-linked (GlcNAc...) asparagine glycans are attached at residues asparagine 1423, asparagine 1457, and asparagine 1563. A run of 3 helical transmembrane segments spans residues 1595–1615 (LSTV…YWLV), 1621–1641 (IPYT…LIFI), and 1648–1668 (MVGW…ALPL). N-linked (GlcNAc...) asparagine glycosylation is present at asparagine 1786. Residues 1790-1845 (LPSDDAILAEIREILRTADLMSVTKKSIKLELERRFGVNLDLKRPYINSATEAVLA) enclose the DEK-C domain.

In the N-terminal section; belongs to the TRAFAC class myosin-kinesin ATPase superfamily. Myosin family. It in the C-terminal section; belongs to the chitin synthase family. Class V subfamily.

It is found in the cell membrane. The protein localises to the cell septum. The protein resides in the cell tip. The enzyme catalyses [(1-&gt;4)-N-acetyl-beta-D-glucosaminyl](n) + UDP-N-acetyl-alpha-D-glucosamine = [(1-&gt;4)-N-acetyl-beta-D-glucosaminyl](n+1) + UDP + H(+). Polymerizes chitin, a structural polymer of the cell wall and septum, by transferring the sugar moiety of UDP-GlcNAc to the non-reducing end of the growing chitin polymer. Important for hyphal growth and conidiophore development but not pathogenicity. This Aspergillus fumigatus (strain ATCC MYA-4609 / CBS 101355 / FGSC A1100 / Af293) (Neosartorya fumigata) protein is Chitin synthase E.